An 83-amino-acid polypeptide reads, in one-letter code: Defensin-like protein 194 (83 aa).

The N-terminal stretch at methionine 1 to alanine 27 is a signal peptide. Cystine bridges form between cysteine 32–cysteine 78, cysteine 44–cysteine 68, cysteine 53–cysteine 73, and cysteine 57–cysteine 75.

It belongs to the DEFL family. Protease inhibitor I18 (RTI/MTI-2) subfamily.

Its subcellular location is the secreted. The sequence is that of Defensin-like protein 194 (ATTI3) from Arabidopsis thaliana (Mouse-ear cress).